A 2352-amino-acid polypeptide reads, in one-letter code: MLFFSIPTILLIFFLFIQIITAAFLTDENEPWNLNRNWTAQKILDYSAEWNSHEYFPSPSNWRALPFYTIILDKWTNGVPENDVAEDTVFESDPYEVTFRAGGDIVGLVTPRSLDYLESMGIKAVYIAGTPFQNLPWYPDGYSPLDFTLLDKHTGTLNQWHEAIMKLHERGFYVVVDFTISTLSELSYFVNSSMSFANTSAPFSTKGYKMKYKHPEYHYTDFQLSNGSSYSCNAPTFWDVTGLPINNTEDLNSISEVMCLSGDFDHYGDVEAFGNHPPWWRQLSNFASVQDRLRDWDPIVAKKLKHLGCLAVKMLDIDGIRVDKATQITADFLGDWSAYIRQCAREIGKENFFIPGEVTSGADFGSIYVGRGRQADQRPNNREIALQTGYNESKYFLRKESDSALDSVSFHYSVYRTLTLLLGLQGELFAAFDLNRHDFAAMWNQMLIQDDMINANTKKFDPRHLYGLTNQDIFRWPSIKDGRFKQLLGLFVVHLLMPGIPLIYYGEEQNLKLLDNQAANYIFGRQPITSSIGWQKHGCYQIGTTQYTDLDFGPASEACRDDWNSLDHLDPTSPTKHYIARMNEIRSYFPQVRDGWDLKLIGKWTHEGTFPGNELYGESNPTTWGLWSMIRGPLAPYQKFSDQNDYIWLIFTNENTTKTYDMDCMRQVDNKFPPYPALLGPYSSGSTVKNLLYPYEEIDLSTSTIDSPDIGNIGCIPHLTIDAYGSKIFVKKEDWIRPSLYLTKFLPGHDSRIYSATEVTSFKISLGFSEEVDCKDLFKRIGFNSRTLNSSFAPKILEDSISCGYLDQPAPQEYTNAPVTKWFFNATLDSVPNGMHELLLNEVKSTSNQTMQSKIARLIFRVGNEENPLVYPNNATFSPSLLYKASNGDLYVNHTGAGADKYRFSLNYGGTYSKWKTVSTPSEKLRKPTWNGTNLQKWDGDHLIVQYWSSIALSTAHVQHGDTLNYSRQFPNLFVQGAFNRFGYDGSMPSKMSYNLENRTWSYDLISTWPAELVLNVWGMNPDNNADQGWVYGDLDNDTIIDRVPPGSSRISNFIRFLDPPPKPYLSYKMYLNDFTRQLHYIPKGSWTVQIVAIVLLILLPPLFGIFSVALYSGAFSRVTIFNGSHNRGIKVAKQKIKSIMSRIFPFSVHLPLDNSSELLKQLPESEKRLNVLVATLEYDVPDLGIRVKIGGLGVMAQLMGQHMEFQDMVWVVPIISGVEYPFDKLCTEPKIAVKIGDDEFVVNCYSYKSGNITYVFLQSEVFYKQSSKEPYPLKMDDLASAIFYSVWNQCIAEVWKRFPLDIYHVNDYHGALAPLYLLPEVIPVAVSLHNAEFQGLWPLRTSAELECVCSIFNIEKDICTKYVQFGHVFNLLHSIISYVRKHQGGYGVVAVSDKYSKQTLSRYPIFWSLVHISGLPNPDPSDLKLLNHLTDDPVDVDFVLEAKRKLLKKQTQEWANLDVDPSAQLLVFVGRWSHQKGIDLIADLAPKLLTEHNVQLITIGPVIDLHGQFAAEKLEQIAKRFPTRVLCKPVFTAVPPFLFAGTDFALIPSRDEPFGLVAVEFGRKGVLCIGSRTGGLGHMPGWWFQMASPNTGHLLTQFENAITKALHSNGELRARLRVEALRQRFPVCIWKQKSENLLKSCIYVHEMETLKHASPTFKAYQFVVRICHYLTSKVKSINKDQVFNAFSPDVSERPPLFEVASCSNETDSVEKLTPELSVSPESDMHFKDGNSSKLEIVESKEIYASDSDISNSTSEDINKDECVSKDIEVDNFALNLQSQSYEGDSNDFGIREVPLSDANQSSQADSTSIDRYGPYSSQKVNFSKYKDFVESRPTFFQSSVTFTDADGSTRKTFSKRLENLTTSNTLKSLSVDHFIRKHERKYFNGLRKQEIDVKLKSRSDKEKSCTVSESYKQIDCDTYEATRLQKLLLHSIGGWPLYTIVLAIGQILGASSYQLTLLSGESAQSTVSMYILLSIFSFFSLFWWFLSRVVQARYILSLPFFFFGISFILVAITHFFQKTTACSVIQHIAAYVYAISSSTGSLYFAWNFGAEGGIATHHWILRACLVHGIQQIWSAILWSWGDLLSKKDLTQNVGPGIFAGGLIASFICFGLSYVTFAGLPAFYRQAPSIIPAFYRSLGKRNIVIWFFISQILINYWLAVPYGQAWRFFWNTSNTPLWSIIILLLIFFIVVWAVLLSVIKILSLNNVWFPVIFGLGLICPRWCLEFWSSSGLGINLPWAGKASALLTKSVWLLLALWDGIQGVGVGVMLLQTLARDHVAFTLMLAQVISCITIMIAKPSLPVSDRVFPNLGAWNPSEGPGPCASPCFYIALICQFVAVGGLLYHYRKSQLAL.

The disordered stretch occupies residues 1786 to 1813; sequence SNDFGIREVPLSDANQSSQADSTSIDRY. The segment covering 1798–1813 has biased composition (polar residues); the sequence is DANQSSQADSTSIDRY.

The protein belongs to the glycosyltransferase group 1 family.

It carries out the reaction [(1-&gt;3)-alpha-D-glucosyl](n) + UDP-alpha-D-glucose = [(1-&gt;3)-alpha-D-glucosyl](n+1) + UDP + H(+). This is Cell wall alpha-1,3-glucan synthase mok12 (mok12) from Schizosaccharomyces pombe (strain 972 / ATCC 24843) (Fission yeast).